The chain runs to 189 residues: Segregation and condensation protein B (189 aa).

This sequence belongs to the ScpB family. In terms of assembly, homodimer. Homodimerization may be required to stabilize the binding of ScpA to the Smc head domains. Component of a cohesin-like complex composed of ScpA, ScpB and the Smc homodimer, in which ScpA and ScpB bind to the head domain of Smc. The presence of the three proteins is required for the association of the complex with DNA.

It is found in the cytoplasm. Functionally, participates in chromosomal partition during cell division. May act via the formation of a condensin-like complex containing Smc and ScpA that pull DNA away from mid-cell into both cell halves. This chain is Segregation and condensation protein B, found in Streptococcus mitis.